The following is a 520-amino-acid chain: tRNA (guanine-N(7)-)-methyltransferase non-catalytic subunit TRM82 (520 aa).

The segment at 51-102 (PLDSEISPDRASSAGTCAEPPEKRRKLTPPVDESGEAQTEQSAKAKARKSQT) is disordered. WD repeat units follow at residues 105-145 (QAWS…KLTQ), 244-291 (GHVS…HIIH), and 296-338 (GHTS…QTIP).

It belongs to the WD repeat TRM82 family. Forms a heterodimer with the catalytic subunit TRM8.

The protein localises to the nucleus. It functions in the pathway tRNA modification; N(7)-methylguanine-tRNA biosynthesis. Its function is as follows. Required for the formation of N(7)-methylguanine at position 46 (m7G46) in tRNA. In the complex, it is required to stabilize and induce conformational changes of the catalytic subunit. This chain is tRNA (guanine-N(7)-)-methyltransferase non-catalytic subunit TRM82, found in Coccidioides immitis (strain RS) (Valley fever fungus).